The chain runs to 430 residues: Glutamate-1-semialdehyde 2,1-aminomutase (430 aa).

Lys-267 is subject to N6-(pyridoxal phosphate)lysine.

It belongs to the class-III pyridoxal-phosphate-dependent aminotransferase family. HemL subfamily. Homodimer. Pyridoxal 5'-phosphate is required as a cofactor.

The protein resides in the cytoplasm. It carries out the reaction (S)-4-amino-5-oxopentanoate = 5-aminolevulinate. It functions in the pathway porphyrin-containing compound metabolism; protoporphyrin-IX biosynthesis; 5-aminolevulinate from L-glutamyl-tRNA(Glu): step 2/2. The sequence is that of Glutamate-1-semialdehyde 2,1-aminomutase from Anaeromyxobacter dehalogenans (strain 2CP-1 / ATCC BAA-258).